The sequence spans 1008 residues: Kinesin-like protein KIN-5C (1008 aa).

One can recognise a Kinesin motor domain in the interval 12-359 (NVQVLLRCRP…LDYAHRAKSI (348 aa)). 98 to 105 (GQTGTGKT) lines the ATP pocket. Positions 402–459 (KDRYQQEENERKAMADQIEQMTTSLEANQKQINDLQEKYDSELQHSADLSKKLEATEK) form a coiled coil. Disordered stretches follow at residues 910–931 (VEAH…TAGI), 943–962 (YKDY…EVPS), and 975–1008 (ESLM…TINN). The span at 913–925 (HLGESQHLQESHS) shows a compositional bias: basic and acidic residues. Positions 979–995 (DEFRENHPYEPSKDRRP) are enriched in basic and acidic residues.

It belongs to the TRAFAC class myosin-kinesin ATPase superfamily. Kinesin family. KIN-5/BimC subfamily.

The protein localises to the cytoplasm. Its subcellular location is the cytoskeleton. It is found in the spindle. Its function is as follows. Responsible for microtubule translocation. May be important for the organization of phragmoplast-specific arrays of microtubules. Plays an essential role in stabilizing the mitotic spindle. Required during mitotic cytokinesis. This chain is Kinesin-like protein KIN-5C, found in Oryza sativa subsp. japonica (Rice).